We begin with the raw amino-acid sequence, 205 residues long: Pyrrolidone-carboxylate peptidase (205 aa).

Residues glutamate 78, cysteine 141, and histidine 165 contribute to the active site.

This sequence belongs to the peptidase C15 family. In terms of assembly, homotetramer.

The protein resides in the cytoplasm. It carries out the reaction Release of an N-terminal pyroglutamyl group from a polypeptide, the second amino acid generally not being Pro.. Its function is as follows. Removes 5-oxoproline from various penultimate amino acid residues except L-proline. This chain is Pyrrolidone-carboxylate peptidase, found in Thermosipho africanus (strain TCF52B).